The sequence spans 283 residues: Pantothenate synthetase (283 aa).

ATP is bound at residue 30 to 37 (MGNLHDGH). H37 acts as the Proton donor in catalysis. Q61 contributes to the (R)-pantoate binding site. Q61 provides a ligand contact to beta-alanine. An ATP-binding site is contributed by 149–152 (GEKD). Q155 contributes to the (R)-pantoate binding site. ATP is bound at residue 186–189 (LSSR).

This sequence belongs to the pantothenate synthetase family. As to quaternary structure, homodimer.

The protein resides in the cytoplasm. It catalyses the reaction (R)-pantoate + beta-alanine + ATP = (R)-pantothenate + AMP + diphosphate + H(+). It functions in the pathway cofactor biosynthesis; (R)-pantothenate biosynthesis; (R)-pantothenate from (R)-pantoate and beta-alanine: step 1/1. In terms of biological role, catalyzes the condensation of pantoate with beta-alanine in an ATP-dependent reaction via a pantoyl-adenylate intermediate. The polypeptide is Pantothenate synthetase (Escherichia coli O127:H6 (strain E2348/69 / EPEC)).